The primary structure comprises 466 residues: Alpha-1A adrenergic receptor (466 aa).

The Extracellular portion of the chain corresponds to 1-27; sequence MVFLSGNASDSSNCTQPPAPVNISKAI. 3 N-linked (GlcNAc...) asparagine glycosylation sites follow: Asn7, Asn13, and Asn22. The chain crosses the membrane as a helical span at residues 28 to 51; that stretch reads LLGVILGGLILFGVLGNILVILSV. The Cytoplasmic segment spans residues 52–64; the sequence is ACHRHLHSVTHYY. Residues 65-88 form a helical membrane-spanning segment; that stretch reads IVNLAVADLLLTSTVLPFSAIFEV. At 89-99 the chain is on the extracellular side; the sequence is LGYWAFGRVFC. The cysteines at positions 99 and 176 are disulfide-linked. A helical membrane pass occupies residues 100–122; sequence NIWAAVDVLCCTASIMGLCIISI. At 123–143 the chain is on the cytoplasmic side; the sequence is DRYIGVSYPLRYPTIVTQRRG. Residues 144 to 167 traverse the membrane as a helical segment; it reads LMALLCVWALSLVISIGPLFGWRQ. Residues 168 to 181 are Extracellular-facing; the sequence is PAPEDETICQINEE. Residues 182 to 205 form a helical membrane-spanning segment; that stretch reads PGYVLFSALGSFYLPLAIILVMYC. Residues 206-273 lie on the Cytoplasmic side of the membrane; the sequence is RVYVVAKRES…FSREKKAAKT (68 aa). Position 215 is a phosphoserine; by PKA (Ser215). A helical membrane pass occupies residues 274 to 297; sequence LGIVVGCFVLCWLPFFLVMPIGSF. Topologically, residues 298 to 305 are extracellular; it reads FPDFKPSE. Residues 306–329 form a helical membrane-spanning segment; that stretch reads TVFKIVFWLGYLNSCINPIIYPCS. The Cytoplasmic portion of the chain corresponds to 330 to 466; it reads SQEFKKAFQN…ISLSENGEEV (137 aa). The Nuclear localization signal motif lies at 334–349; the sequence is KKAFQNVLRIQCLCRK. Cys345 carries S-palmitoyl cysteine lipidation.

It belongs to the G-protein coupled receptor 1 family. Adrenergic receptor subfamily. ADRA1A sub-subfamily. In terms of assembly, homo- and heterooligomer. Heterooligomerizes with ADRA1B homooligomers in cardiac myocytes. Interacts with CAVIN4. Post-translationally, C-terminal Ser or Thr residues may be phosphorylated. As to expression, expressed in heart, brain, liver and prostate, but not in kidney, lung, adrenal, aorta and pituitary. Within the prostate, expressed in the apex, base, periurethral and lateral lobe. Isoform 4 is the most abundant isoform expressed in the prostate with high levels also detected in liver and heart.

The protein localises to the nucleus membrane. The protein resides in the cell membrane. It localises to the cytoplasm. Its subcellular location is the membrane. It is found in the caveola. In terms of biological role, this alpha-adrenergic receptor mediates its action by association with G proteins that activate a phosphatidylinositol-calcium second messenger system. Its effect is mediated by G(q) and G(11) proteins. Nuclear ADRA1A-ADRA1B heterooligomers regulate phenylephrine(PE)-stimulated ERK signaling in cardiac myocytes. This Homo sapiens (Human) protein is Alpha-1A adrenergic receptor (ADRA1A).